The primary structure comprises 150 residues: FAD synthase (150 aa).

ATP contacts are provided by residues 16-17, 21-24, and Asp-102; these read VF and HVGH.

It belongs to the archaeal FAD synthase family. As to quaternary structure, homodimer. The cofactor is a divalent metal cation.

The enzyme catalyses FMN + ATP + H(+) = FAD + diphosphate. It functions in the pathway cofactor biosynthesis; FAD biosynthesis; FAD from FMN: step 1/1. Functionally, catalyzes the transfer of the AMP portion of ATP to flavin mononucleotide (FMN) to produce flavin adenine dinucleotide (FAD) coenzyme. The chain is FAD synthase from Thermococcus onnurineus (strain NA1).